The chain runs to 293 residues: Phosphatidylglycerol--prolipoprotein diacylglyceryl transferase (293 aa).

Transmembrane regions (helical) follow at residues 4 to 24 (ILAF…LFIF), 45 to 65 (FELR…YFVA), 81 to 101 (ELIF…YVLF), and 115 to 135 (IWEG…TGFL). Position 165 (Arg-165) interacts with a 1,2-diacyl-sn-glycero-3-phospho-(1'-sn-glycerol). Transmembrane regions (helical) follow at residues 204–224 (PTFL…SVYF), 231–249 (HGEV…RIVI), and 262–282 (IKAA…GFLI).

Belongs to the Lgt family.

The protein resides in the cell inner membrane. The enzyme catalyses L-cysteinyl-[prolipoprotein] + a 1,2-diacyl-sn-glycero-3-phospho-(1'-sn-glycerol) = an S-1,2-diacyl-sn-glyceryl-L-cysteinyl-[prolipoprotein] + sn-glycerol 1-phosphate + H(+). It functions in the pathway protein modification; lipoprotein biosynthesis (diacylglyceryl transfer). Its function is as follows. Catalyzes the transfer of the diacylglyceryl group from phosphatidylglycerol to the sulfhydryl group of the N-terminal cysteine of a prolipoprotein, the first step in the formation of mature lipoproteins. The polypeptide is Phosphatidylglycerol--prolipoprotein diacylglyceryl transferase (Thermotoga petrophila (strain ATCC BAA-488 / DSM 13995 / JCM 10881 / RKU-1)).